Reading from the N-terminus, the 412-residue chain is Gamma-glutamyl phosphate reductase (412 aa).

It belongs to the gamma-glutamyl phosphate reductase family.

The protein localises to the cytoplasm. The enzyme catalyses L-glutamate 5-semialdehyde + phosphate + NADP(+) = L-glutamyl 5-phosphate + NADPH + H(+). Its pathway is amino-acid biosynthesis; L-proline biosynthesis; L-glutamate 5-semialdehyde from L-glutamate: step 2/2. Functionally, catalyzes the NADPH-dependent reduction of L-glutamate 5-phosphate into L-glutamate 5-semialdehyde and phosphate. The product spontaneously undergoes cyclization to form 1-pyrroline-5-carboxylate. This is Gamma-glutamyl phosphate reductase from Actinobacillus pleuropneumoniae serotype 5b (strain L20).